The sequence spans 81 residues: MDVAAMQVKIVDIIANQLGVDKEIITPEANVVDDLGADSLDVVELVMALEEAFDVEIPDEDAESIRTVKDIFDYLAKNKAA.

Positions 1-79 constitute a Carrier domain; sequence MDVAAMQVKI…DIFDYLAKNK (79 aa). At Ser39 the chain carries O-(pantetheine 4'-phosphoryl)serine.

The protein belongs to the acyl carrier protein (ACP) family. In terms of processing, 4'-phosphopantetheine is transferred from CoA to a specific serine of apo-ACP by AcpS. This modification is essential for activity because fatty acids are bound in thioester linkage to the sulfhydryl of the prosthetic group.

It is found in the cytoplasm. Its pathway is lipid metabolism; fatty acid biosynthesis. Functionally, carrier of the growing fatty acid chain in fatty acid biosynthesis. This Syntrophobacter fumaroxidans (strain DSM 10017 / MPOB) protein is Acyl carrier protein.